The sequence spans 158 residues: Protein-export protein SecB (158 aa).

The protein belongs to the SecB family. In terms of assembly, homotetramer, a dimer of dimers. One homotetramer interacts with 1 SecA dimer.

Its subcellular location is the cytoplasm. In terms of biological role, one of the proteins required for the normal export of preproteins out of the cell cytoplasm. It is a molecular chaperone that binds to a subset of precursor proteins, maintaining them in a translocation-competent state. It also specifically binds to its receptor SecA. The protein is Protein-export protein SecB of Rhodopseudomonas palustris (strain HaA2).